Here is a 122-residue protein sequence, read N- to C-terminus: Small ribosomal subunit protein uS13 (122 aa).

The interval 94–122 (KGLPVRGQRTHTNARTRKGPRRAIAGKKK) is disordered.

The protein belongs to the universal ribosomal protein uS13 family. Part of the 30S ribosomal subunit. Forms a loose heterodimer with protein S19. Forms two bridges to the 50S subunit in the 70S ribosome.

In terms of biological role, located at the top of the head of the 30S subunit, it contacts several helices of the 16S rRNA. In the 70S ribosome it contacts the 23S rRNA (bridge B1a) and protein L5 of the 50S subunit (bridge B1b), connecting the 2 subunits; these bridges are implicated in subunit movement. Contacts the tRNAs in the A and P-sites. The polypeptide is Small ribosomal subunit protein uS13 (Syntrophus aciditrophicus (strain SB)).